The chain runs to 291 residues: 4-diphosphocytidyl-2-C-methyl-D-erythritol kinase (291 aa).

The active site involves Lys11. Position 94 to 104 (94 to 104 (PAGSGLGGGSA)) interacts with ATP. The active site involves Asp136.

The protein belongs to the GHMP kinase family. IspE subfamily.

It catalyses the reaction 4-CDP-2-C-methyl-D-erythritol + ATP = 4-CDP-2-C-methyl-D-erythritol 2-phosphate + ADP + H(+). Its pathway is isoprenoid biosynthesis; isopentenyl diphosphate biosynthesis via DXP pathway; isopentenyl diphosphate from 1-deoxy-D-xylulose 5-phosphate: step 3/6. Catalyzes the phosphorylation of the position 2 hydroxy group of 4-diphosphocytidyl-2C-methyl-D-erythritol. In Treponema pallidum (strain Nichols), this protein is 4-diphosphocytidyl-2-C-methyl-D-erythritol kinase.